A 495-amino-acid chain; its full sequence is UDP-glycosyltransferase 71B7 (495 aa).

UDP-alpha-D-glucose is bound by residues S284, A351 to Q353, H368 to E376, and Y390 to Q393.

Belongs to the UDP-glycosyltransferase family.

This Arabidopsis thaliana (Mouse-ear cress) protein is UDP-glycosyltransferase 71B7 (UGT71B7).